The chain runs to 523 residues: Calcium-dependent protein kinase 34 (523 aa).

Residues 1 to 60 are disordered; the sequence is MGNCCSHGRDSDDNKEEPRPENGGGGVGAAEASVRASKHPPASPPPATKQGPIGPVLGRP. Gly2 carries N-myristoyl glycine lipidation. The segment covering 7–20 has biased composition (basic and acidic residues); it reads HGRDSDDNKEEPRP. The Protein kinase domain occupies 68-326; sequence YTLGKELGRG…AAQVLNHPWI (259 aa). Residues 74 to 82 and Lys97 each bind ATP; that span reads LGRGQFGVT. Asp192 acts as the Proton acceptor in catalysis. Position 232 is a phosphoserine (Ser232). Positions 332-362 are autoinhibitory domain; sequence APDVPLDNAVMSRLKQFKAMNNFKKVALRVI. EF-hand domains are found at residues 369-404, 405-440, 441-476, and 480-511; these read EEIMGLKEMFKGMDTDNSGTITLEELRQGLAKQGTR, LSEYEVQQLMEAADADGNGTIDYGEFIAATMHINRL, DREEHLYSAFQHFDKDNSGYITTEELEQALREFGMN, and DIKEIISEVDGDNDGRINYEEFVAMMRKGNPD. Ca(2+) is bound by residues Asp382, Asp384, Ser386, Thr388, Glu393, Asp418, Asp420, Asn422, Thr424, Glu429, Asp454, Asp456, Ser458, Tyr460, Glu465, Asp489, Asp491, Asp493, Arg495, and Glu500.

It belongs to the protein kinase superfamily. Ser/Thr protein kinase family. CDPK subfamily.

It is found in the membrane. The catalysed reaction is L-seryl-[protein] + ATP = O-phospho-L-seryl-[protein] + ADP + H(+). It carries out the reaction L-threonyl-[protein] + ATP = O-phospho-L-threonyl-[protein] + ADP + H(+). Its activity is regulated as follows. Activated by calcium. Autophosphorylation may play an important role in the regulation of the kinase activity. Its function is as follows. May play a role in signal transduction pathways that involve calcium as a second messenger. The sequence is that of Calcium-dependent protein kinase 34 (CPK34) from Arabidopsis thaliana (Mouse-ear cress).